Reading from the N-terminus, the 816-residue chain is Leucine--tRNA ligase (816 aa).

The 'HIGH' region signature appears at 42–52 (PYPSGSLHMGH). Positions 574-578 (KMSKS) match the 'KMSKS' region motif. Residue Lys577 coordinates ATP.

This sequence belongs to the class-I aminoacyl-tRNA synthetase family.

Its subcellular location is the cytoplasm. The catalysed reaction is tRNA(Leu) + L-leucine + ATP = L-leucyl-tRNA(Leu) + AMP + diphosphate. This Ruthia magnifica subsp. Calyptogena magnifica protein is Leucine--tRNA ligase.